The sequence spans 196 residues: MDLDFHIKPEIRVLGIDDSALLNEKVMIVGTVFRGGDWMDGVLRSEITRDGLDATEVISTMIKNSRHYAQLRIVMLDGVTYGGFNVVDIEELYRETGLPVIVVMRAYPDFEKIRAALRHFSDGELRWEIIKKAGKIEKLVTEKNGTPIYIQKAGIGLKSAEKIVRLTSIRSNIPEPLRVAHLIATGIIFGESRGRA.

This sequence belongs to the UPF0215 family.

This chain is UPF0215 protein MA_4269, found in Methanosarcina acetivorans (strain ATCC 35395 / DSM 2834 / JCM 12185 / C2A).